A 443-amino-acid chain; its full sequence is ATP-dependent protease ATPase subunit HslU (443 aa).

ATP contacts are provided by residues isoleucine 18 and 60–65 (GVGKTE). The tract at residues 139–161 (ARDSGFDANPSEENNATRQKFRK) is disordered. 3 residues coordinate ATP: aspartate 256, glutamate 321, and arginine 393.

Belongs to the ClpX chaperone family. HslU subfamily. A double ring-shaped homohexamer of HslV is capped on each side by a ring-shaped HslU homohexamer. The assembly of the HslU/HslV complex is dependent on binding of ATP.

The protein resides in the cytoplasm. Functionally, ATPase subunit of a proteasome-like degradation complex; this subunit has chaperone activity. The binding of ATP and its subsequent hydrolysis by HslU are essential for unfolding of protein substrates subsequently hydrolyzed by HslV. HslU recognizes the N-terminal part of its protein substrates and unfolds these before they are guided to HslV for hydrolysis. The polypeptide is ATP-dependent protease ATPase subunit HslU (Nitrosomonas eutropha (strain DSM 101675 / C91 / Nm57)).